Reading from the N-terminus, the 732-residue chain is B-cadherin (732 aa).

The propeptide occupies 1–6 (LRRQKR). 5 Cadherin domains span residues 6–114 (RDWV…KPQF), 115–227 (TQEV…APEF), 228–339 (DPKT…APVF), 340–443 (DPPL…VNDH), and 444–554 (GPEP…RVDT). Over 6 to 554 (RDWVIPPIKV…SCAQKPRVDT (549 aa)) the chain is Extracellular. Residue Asn137 is glycosylated (N-linked (GlcNAc...) asparagine). The N-linked (GlcNAc...) asparagine glycan is linked to Asn410. A helical membrane pass occupies residues 555-580 (GVPIVLAVLGAVLALLLVLLLLLLLV). Over 581–732 (RRRKVVKEPL…ELYGGGEDEE (152 aa)) the chain is Cytoplasmic.

In terms of tissue distribution, expressed in a wide variety of tissues.

The protein localises to the cell membrane. Its function is as follows. Cadherins are calcium-dependent cell adhesion proteins. They preferentially interact with themselves in a homophilic manner in connecting cells; cadherins may thus contribute to the sorting of heterogeneous cell types. B-cadherin may have important functions in neurogenesis, in at least some epithelia, and in embryogenesis. The chain is B-cadherin (K-CAM) from Gallus gallus (Chicken).